Reading from the N-terminus, the 487-residue chain is Probable glycine dehydrogenase (decarboxylating) subunit 2 (487 aa).

Lysine 273 is modified (N6-(pyridoxal phosphate)lysine).

It belongs to the GcvP family. C-terminal subunit subfamily. In terms of assembly, the glycine cleavage system is composed of four proteins: P, T, L and H. In this organism, the P 'protein' is a heterodimer of two subunits. The cofactor is pyridoxal 5'-phosphate.

It carries out the reaction N(6)-[(R)-lipoyl]-L-lysyl-[glycine-cleavage complex H protein] + glycine + H(+) = N(6)-[(R)-S(8)-aminomethyldihydrolipoyl]-L-lysyl-[glycine-cleavage complex H protein] + CO2. Its function is as follows. The glycine cleavage system catalyzes the degradation of glycine. The P protein binds the alpha-amino group of glycine through its pyridoxal phosphate cofactor; CO(2) is released and the remaining methylamine moiety is then transferred to the lipoamide cofactor of the H protein. This Lysinibacillus sphaericus (strain C3-41) protein is Probable glycine dehydrogenase (decarboxylating) subunit 2.